A 257-amino-acid chain; its full sequence is Zinc transporter ZupT (257 aa).

Helical transmembrane passes span 5 to 25, 33 to 53, 61 to 81, 109 to 129, 137 to 157, 171 to 191, 195 to 215, and 236 to 256; these read LILT…GVLG, LAFS…MEML, GMSP…YFGL, AILL…ATFV, LGFG…LAVA, IFWA…AWLI, LVSP…MVAL, and GVLC…TIGI. Asn120 and Glu123 together coordinate Fe(2+). Zn(2+)-binding residues include Glu123 and His148. Fe(2+) contacts are provided by Asn149, Glu152, and Glu181. Glu152 is a binding site for Zn(2+).

This sequence belongs to the ZIP transporter (TC 2.A.5) family. ZupT subfamily.

Its subcellular location is the cell inner membrane. It catalyses the reaction Zn(2+)(in) = Zn(2+)(out). In terms of biological role, mediates zinc uptake. May also transport other divalent cations. In Salmonella paratyphi A (strain ATCC 9150 / SARB42), this protein is Zinc transporter ZupT.